The chain runs to 89 residues: Small ribosomal subunit protein uS15 (89 aa).

The protein belongs to the universal ribosomal protein uS15 family. Part of the 30S ribosomal subunit. Forms a bridge to the 50S subunit in the 70S ribosome, contacting the 23S rRNA.

In terms of biological role, one of the primary rRNA binding proteins, it binds directly to 16S rRNA where it helps nucleate assembly of the platform of the 30S subunit by binding and bridging several RNA helices of the 16S rRNA. Functionally, forms an intersubunit bridge (bridge B4) with the 23S rRNA of the 50S subunit in the ribosome. The chain is Small ribosomal subunit protein uS15 from Psychromonas ingrahamii (strain DSM 17664 / CCUG 51855 / 37).